The following is a 406-amino-acid chain: Tryptophan 2,3-dioxygenase (406 aa).

Residues Phe72 to His76 and Arg144 each bind substrate. Position 328 (His328) interacts with heme. Thr342 lines the substrate pocket.

Belongs to the tryptophan 2,3-dioxygenase family. In terms of assembly, homotetramer. Dimer of dimers. The cofactor is heme.

The catalysed reaction is L-tryptophan + O2 = N-formyl-L-kynurenine. It functions in the pathway amino-acid degradation; L-tryptophan degradation via kynurenine pathway; L-kynurenine from L-tryptophan: step 1/2. Functionally, heme-dependent dioxygenase that catalyzes the oxidative cleavage of the L-tryptophan (L-Trp) pyrrole ring and converts L-tryptophan to N-formyl-L-kynurenine. Catalyzes the oxidative cleavage of the indole moiety. The chain is Tryptophan 2,3-dioxygenase from Xenopus tropicalis (Western clawed frog).